The chain runs to 366 residues: Inactive PGL/p-HBAD biosynthesis glycosyltransferase Mb2982c (366 aa).

Disordered stretches follow at residues 1–23 (MEETSVAGDPGPDAGTSTAPNAA) and 295–366 (DGDR…HGGP). Residues 295-311 (DGDRGHRWPEPPEERAG) show a composition bias toward basic and acidic residues.

This sequence belongs to the UDP-glycosyltransferase family.

In Mycobacterium bovis (strain ATCC BAA-935 / AF2122/97), this protein is Inactive PGL/p-HBAD biosynthesis glycosyltransferase Mb2982c.